A 210-amino-acid chain; its full sequence is Pyridoxine/pyridoxamine 5'-phosphate oxidase (210 aa).

Substrate-binding positions include 7 to 10 and Lys65; that span reads RQSY. Residues 60 to 65, 75 to 76, Arg81, Lys82, and Gln104 each bind FMN; these read RIVLIK and FT. 3 residues coordinate substrate: Tyr122, Arg126, and Ser130. Residues 139 to 140 and Trp182 contribute to the FMN site; that span reads QS. A substrate-binding site is contributed by 188-190; it reads RLH. Arg192 contacts FMN.

This sequence belongs to the pyridoxamine 5'-phosphate oxidase family. As to quaternary structure, homodimer. It depends on FMN as a cofactor.

The catalysed reaction is pyridoxamine 5'-phosphate + O2 + H2O = pyridoxal 5'-phosphate + H2O2 + NH4(+). It catalyses the reaction pyridoxine 5'-phosphate + O2 = pyridoxal 5'-phosphate + H2O2. The protein operates within cofactor metabolism; pyridoxal 5'-phosphate salvage; pyridoxal 5'-phosphate from pyridoxamine 5'-phosphate: step 1/1. It participates in cofactor metabolism; pyridoxal 5'-phosphate salvage; pyridoxal 5'-phosphate from pyridoxine 5'-phosphate: step 1/1. In terms of biological role, catalyzes the oxidation of either pyridoxine 5'-phosphate (PNP) or pyridoxamine 5'-phosphate (PMP) into pyridoxal 5'-phosphate (PLP). The polypeptide is Pyridoxine/pyridoxamine 5'-phosphate oxidase (Bordetella avium (strain 197N)).